Here is a 459-residue protein sequence, read N- to C-terminus: FBD-associated F-box protein At1g61320 (459 aa).

A disordered region spans residues 1-25; the sequence is MAPPTKRTRVEMAESSNKRMKPSET. Positions 21 to 69 constitute an F-box domain; the sequence is KPSETVPEDVLELMMSTYLPVQSLLTTRVLSKRFRETEVRSLDLDFSGI. The FBD domain maps to 396–428; that stretch reads VKIIGYKGHWHELDIVEFFVKNAPSLKRLELQM.

This Arabidopsis thaliana (Mouse-ear cress) protein is FBD-associated F-box protein At1g61320.